The sequence spans 646 residues: Macrolide export ATP-binding/permease protein MacB (646 aa).

The 239-residue stretch at 5-243 (IELKGVSRTY…TLPKTNRIRQ (239 aa)) folds into the ABC transporter domain. An ATP-binding site is contributed by 41–48 (GASGSGKS). Transmembrane regions (helical) follow at residues 272–292 (TLTM…VALG), 518–538 (FSIL…IGVM), 570–590 (IIEA…LSYI), and 611–631 (AAVA…YLPA).

Belongs to the ABC transporter superfamily. Macrolide exporter (TC 3.A.1.122) family. Homodimer. Part of the tripartite efflux system MacAB-TolC, which is composed of an inner membrane transporter, MacB, a periplasmic membrane fusion protein, MacA, and an outer membrane component, TolC. The complex forms a large protein conduit and can translocate molecules across both the inner and outer membranes. Interacts with MacA.

It is found in the cell inner membrane. Its function is as follows. Part of the tripartite efflux system MacAB-TolC. MacB is a non-canonical ABC transporter that contains transmembrane domains (TMD), which form a pore in the inner membrane, and an ATP-binding domain (NBD), which is responsible for energy generation. Confers resistance against macrolides. The sequence is that of Macrolide export ATP-binding/permease protein MacB from Escherichia coli.